The chain runs to 1168 residues: DNA-directed RNA polymerase subunit beta (1168 aa).

It belongs to the RNA polymerase beta chain family. In terms of assembly, the RNAP catalytic core consists of 2 alpha, 1 beta, 1 beta' and 1 omega subunit. When a sigma factor is associated with the core the holoenzyme is formed, which can initiate transcription.

It carries out the reaction RNA(n) + a ribonucleoside 5'-triphosphate = RNA(n+1) + diphosphate. Its function is as follows. DNA-dependent RNA polymerase catalyzes the transcription of DNA into RNA using the four ribonucleoside triphosphates as substrates. The polypeptide is DNA-directed RNA polymerase subunit beta (Corynebacterium kroppenstedtii (strain DSM 44385 / JCM 11950 / CIP 105744 / CCUG 35717)).